The following is a 318-amino-acid chain: Ribose-phosphate pyrophosphokinase (318 aa).

ATP is bound by residues 40–42 and 99–100; these read DGE and RQ. 2 residues coordinate Mg(2+): His-134 and Asp-173. The active site involves Lys-196. Residues Arg-198, Asp-222, and 226–230 contribute to the D-ribose 5-phosphate site; that span reads DTAGT.

This sequence belongs to the ribose-phosphate pyrophosphokinase family. Class I subfamily. As to quaternary structure, homohexamer. The cofactor is Mg(2+).

It is found in the cytoplasm. The enzyme catalyses D-ribose 5-phosphate + ATP = 5-phospho-alpha-D-ribose 1-diphosphate + AMP + H(+). Its pathway is metabolic intermediate biosynthesis; 5-phospho-alpha-D-ribose 1-diphosphate biosynthesis; 5-phospho-alpha-D-ribose 1-diphosphate from D-ribose 5-phosphate (route I): step 1/1. Involved in the biosynthesis of the central metabolite phospho-alpha-D-ribosyl-1-pyrophosphate (PRPP) via the transfer of pyrophosphoryl group from ATP to 1-hydroxyl of ribose-5-phosphate (Rib-5-P). This is Ribose-phosphate pyrophosphokinase from Burkholderia pseudomallei (strain K96243).